We begin with the raw amino-acid sequence, 180 residues long: Secreted RxLR effector protein 5 (180 aa).

Positions 1–24 are cleaved as a signal peptide; the sequence is MRFYYTLLATAAALLVHSDALSAA. Residues 44–60 carry the RxLR-dEER motif; that stretch reads RFLRRHTDSETTDNEER.

This sequence belongs to the RxLR effector family.

It is found in the secreted. The protein localises to the host cell. In terms of biological role, secreted effector that partially suppresses elicitor-induced cell death in host and enhances virulence of P.parasitica. This is Secreted RxLR effector protein 5 from Phytophthora nicotianae (Potato buckeye rot agent).